Reading from the N-terminus, the 81-residue chain is uncharacterized protein (81 aa).

The disordered stretch occupies residues 11–34; the sequence is GSVSSSNKVSVANGSSSSSFGSNG.

This is an uncharacterized protein from Dictyostelium discoideum (Social amoeba).